Here is a 126-residue protein sequence, read N- to C-terminus: Large-conductance mechanosensitive channel (126 aa).

2 consecutive transmembrane segments (helical) span residues 14–34 (VIDL…VNSL) and 66–86 (FITT…LVVV).

This sequence belongs to the MscL family. In terms of assembly, homopentamer.

It is found in the cell membrane. Channel that opens in response to stretch forces in the membrane lipid bilayer. May participate in the regulation of osmotic pressure changes within the cell. In Roseiflexus sp. (strain RS-1), this protein is Large-conductance mechanosensitive channel.